The primary structure comprises 426 residues: Gamma-glutamyl phosphate reductase (426 aa).

Belongs to the gamma-glutamyl phosphate reductase family.

The protein resides in the cytoplasm. The enzyme catalyses L-glutamate 5-semialdehyde + phosphate + NADP(+) = L-glutamyl 5-phosphate + NADPH + H(+). The protein operates within amino-acid biosynthesis; L-proline biosynthesis; L-glutamate 5-semialdehyde from L-glutamate: step 2/2. Functionally, catalyzes the NADPH-dependent reduction of L-glutamate 5-phosphate into L-glutamate 5-semialdehyde and phosphate. The product spontaneously undergoes cyclization to form 1-pyrroline-5-carboxylate. The chain is Gamma-glutamyl phosphate reductase from Cupriavidus pinatubonensis (strain JMP 134 / LMG 1197) (Cupriavidus necator (strain JMP 134)).